Reading from the N-terminus, the 63-residue chain is Large ribosomal subunit protein bL28 (63 aa).

This sequence belongs to the bacterial ribosomal protein bL28 family.

In Clostridium botulinum (strain Alaska E43 / Type E3), this protein is Large ribosomal subunit protein bL28.